Reading from the N-terminus, the 352-residue chain is Divinyl chlorophyll a/b light-harvesting protein PcbA (352 aa).

6 consecutive transmembrane segments (helical) span residues 27 to 47 (FIAAHVAHAGLIVFWAGAFTL), 90 to 110 (VLAIAIVHLVSSMVLAAGGLL), 142 to 162 (FILGHHLIILGFAVILLVEWA), 203 to 223 (VMGGHAFLAFVLITGGAWHIA), 243 to 263 (AVLSWSLAGIGWMAIIAAFWS), and 306 to 326 (LANVHYYFGFFFIQGHLWHAL).

The protein belongs to the PsbB/PsbC family. IsiA/Pcb subfamily. In terms of assembly, the antenna complex consists of divinyl chlorophylls (a and b) and divinyl chlorophyll a/b binding proteins and binds less divinyl chlorophyll b than does low-light-adapted Prochlorococcus. Also forms complexes with PSII, consisting of a PSII dimer and 4 or 8 PcbA subunits. These complexes are also found under conditions of iron-starvation. The cofactor is divinyl chlorophyll a. It depends on divinyl chlorophyll b as a cofactor.

It localises to the cellular thylakoid membrane. In terms of biological role, the antenna complex functions as a light receptor, it captures and delivers excitation energy to photosystem II and possibly to photosystem I. The Prochlorales pcb genes are not related to higher plant LHCs. The chain is Divinyl chlorophyll a/b light-harvesting protein PcbA (pcbA) from Prochlorococcus marinus subsp. pastoris (strain CCMP1986 / NIES-2087 / MED4).